Here is a 515-residue protein sequence, read N- to C-terminus: Interferon alpha/beta receptor 2 (515 aa).

Positions Met1 to Gly26 are cleaved as a signal peptide. The Extracellular portion of the chain corresponds to Ile27–Lys243. 2 disulfide bridges follow: Cys39–Cys122 and Cys85–Cys93. N-linked (GlcNAc...) asparagine glycans are attached at residues Asn58, Asn87, Asn116, Asn188, and Asn192. Cys207 and Cys227 form a disulfide bridge. Residues Ile244 to Leu264 traverse the membrane as a helical segment. The Cytoplasmic segment spans residues Lys265 to Arg515. 2 disordered regions span residues Tyr318–Gly418 and Glu455–Arg515. A Phosphotyrosine modification is found at Tyr337. Residues Pro362–Val375 show a composition bias toward acidic residues. The residue at position 400 (Ser400) is a Phosphoserine. The interval Gly418 to Glu444 is mediates interaction with STAT2 (and required for the recruitment of USP18). The segment covering Asn464–Gly488 has biased composition (polar residues). Position 467 is a phosphoserine (Ser467). Tyr512 is modified (phosphotyrosine).

The protein belongs to the type II cytokine receptor family. In terms of assembly, heterodimer with IFNAR1; forming the receptor for type I interferon. Interacts with JAK1. Interacts with the transcriptional factors STAT1 and STAT2. Interacts with USP18; indirectly via STAT2, it negatively regulates the assembly of the ternary interferon-IFNAR1-IFNAR2 complex and therefore type I interferon signaling. Post-translationally, phosphorylated on tyrosine residues upon interferon binding. Phosphorylation at Tyr-337 or Tyr-512 are sufficient to mediate interferon dependent activation of STAT1, STAT2 and STAT3 leading to antiproliferative effects on many different cell types. In terms of processing, glycosylated. Isoform 3 is detected in the urine (at protein level). Expressed in blood cells. Expressed in lymphoblastoid and fibrosarcoma cell lines.

The protein localises to the cell membrane. It localises to the secreted. Together with IFNAR1, forms the heterodimeric receptor for type I interferons (including interferons alpha, beta, epsilon, omega and kappa). Type I interferon binding activates the JAK-STAT signaling cascade, resulting in transcriptional activation or repression of interferon-regulated genes that encode the effectors of the interferon response. Mechanistically, type I interferon-binding brings the IFNAR1 and IFNAR2 subunits into close proximity with one another, driving their associated Janus kinases (JAKs) (TYK2 bound to IFNAR1 and JAK1 bound to IFNAR2) to cross-phosphorylate one another. The activated kinases phosphorylate specific tyrosine residues on the intracellular domains of IFNAR1 and IFNAR2, forming docking sites for the STAT transcription factors (STAT1, STAT2 and STAT). STAT proteins are then phosphorylated by the JAKs, promoting their translocation into the nucleus to regulate expression of interferon-regulated genes. Functionally, potent inhibitor of type I IFN receptor activity. This is Interferon alpha/beta receptor 2 (IFNAR2) from Homo sapiens (Human).